Here is a 341-residue protein sequence, read N- to C-terminus: tRNA uridine(34) hydroxylase (341 aa).

The Rhodanese domain maps to 139 to 233; sequence SDPEVVLVDT…YLEEVPSTET (95 aa). Cys-193 functions as the Cysteine persulfide intermediate in the catalytic mechanism. Composition is skewed to basic and acidic residues over residues 306–316 and 324–341; these read SLAEERGESHI and IEER…QANK. Residues 306-341 are disordered; it reads SLAEERGESHIGGDIQNIIEERRQEKNDKKAKQANK.

The protein belongs to the TrhO family.

The enzyme catalyses uridine(34) in tRNA + AH2 + O2 = 5-hydroxyuridine(34) in tRNA + A + H2O. Catalyzes oxygen-dependent 5-hydroxyuridine (ho5U) modification at position 34 in tRNAs. The chain is tRNA uridine(34) hydroxylase from Colwellia psychrerythraea (strain 34H / ATCC BAA-681) (Vibrio psychroerythus).